The sequence spans 183 residues: MWKFIKSATDQNNWLEHDQNEIVFWGRSNVGKSSLINALASQKIAKTSSTPGRTRLINYFETQRKKIIVDLPGYGFASMSKKAQSKISGIIDFYFRNSKNSKNICILIDAKIGFSYIDLEMIDYLKSLGLLFDIIITKIDKANQSQKHRVKQQALTFSDDINIFMVSSEKKQGLSDLVEHFEL.

The 166-residue stretch at 18-183 (DQNEIVFWGR…LSDLVEHFEL (166 aa)) folds into the EngB-type G domain. GTP contacts are provided by residues 26–33 (GRSNVGKS), 52–56 (GRTRL), 70–73 (DLPG), 137–140 (TKID), and 166–168 (VSS). Residues Ser-33 and Thr-54 each contribute to the Mg(2+) site.

The protein belongs to the TRAFAC class TrmE-Era-EngA-EngB-Septin-like GTPase superfamily. EngB GTPase family. The cofactor is Mg(2+).

Functionally, necessary for normal cell division and for the maintenance of normal septation. The sequence is that of Probable GTP-binding protein EngB from Metamycoplasma arthritidis (strain 158L3-1) (Mycoplasma arthritidis).